The sequence spans 373 residues: Alanine racemase (373 aa).

The active-site Proton acceptor; specific for D-alanine is lysine 40. Residue lysine 40 is modified to N6-(pyridoxal phosphate)lysine. A substrate-binding site is contributed by arginine 140. The active-site Proton acceptor; specific for L-alanine is the tyrosine 268. A substrate-binding site is contributed by methionine 315.

Belongs to the alanine racemase family. Requires pyridoxal 5'-phosphate as cofactor.

It catalyses the reaction L-alanine = D-alanine. The protein operates within amino-acid biosynthesis; D-alanine biosynthesis; D-alanine from L-alanine: step 1/1. Its function is as follows. Catalyzes the interconversion of L-alanine and D-alanine. May also act on other amino acids. This is Alanine racemase (alr) from Levilactobacillus brevis (strain ATCC 367 / BCRC 12310 / CIP 105137 / JCM 1170 / LMG 11437 / NCIMB 947 / NCTC 947) (Lactobacillus brevis).